The primary structure comprises 331 residues: Serpentine receptor class alpha-9 (331 aa).

7 helical membrane passes run 26–46 (IDLLCIVITFVTTYPAIQLVL), 58–78 (LILESLFFANLYQIFYGIEAI), 104–124 (YLKVILGTTGGMIFAQTGLMI), 142–162 (IIGFSITIIVFFCSSITGKLF), 189–209 (YFTVCTVLPLFNLGISILLKI), 238–258 (VCFLAFSLFILLFIYSVGVGA), and 275–295 (LCVVWLYTIPFIAMLLPLLLI).

Belongs to the nematode receptor-like protein sra family.

Its subcellular location is the membrane. The chain is Serpentine receptor class alpha-9 (sra-9) from Caenorhabditis elegans.